We begin with the raw amino-acid sequence, 376 residues long: QANDLDYASLPDSVVEQVRTNGQLALEGDKGELGEQAILSLAQALDTYIPTPERAVTALDTMPSAVGYQPTLAEEMGVLQERYLADTANKGDLSNIPFGTVNLLAYNNYQAYLTMLGKTTDVTGNCELPEGVEMVMPGDNIKNPGVTKYLPTTSYSLPHVNVGTIGHVDHGKTTLTAALTRYLADLVDDAELLELVEMEVRDLLSTYDFPGDDTPIIIGSARVSAAASELAVQLKMAVVHDDTNPTSAAQTNAPWGLARLSSYWGLTLHLPNLTEEQGVTIDEDHPLFIYLPCGIGGAPGGAAYGLKNVFLGSSAGTTREVEHSDKPLHDISYAYLGDARQNWVMTAQTTQAIRLEPSATAGFAGPEFIVNSNQGR.

In terms of biological role, has antibacterial activity against Listeria monocytogenes. This is PCM7-4 from Bacillus velezensis.